The chain runs to 381 residues: cAMP-dependent protein kinase type I-beta regulatory subunit (381 aa).

Residues 1-136 (MASPSCFHSE…ALAKAISKNV (136 aa)) form a dimerization and phosphorylation region. Ser3 carries the phosphoserine modification. The residue at position 21 (Tyr21) is a 3'-nitrotyrosine. The disordered stretch occupies residues 66 to 88 (LARQKSNSQCDSHDEEISPTPPN). Ser77 and Ser83 each carry phosphoserine. Phosphothreonine is present on Thr85. Positions 96–100 (RRGGV) match the Pseudophosphorylation motif motif. Arg97 bears the Omega-N-methylarginine mark. Residues 137–254 (LFSH…SKVS), Glu202, Arg211, 255–381 (ILES…SLTV), Glu326, and Arg335 contribute to the 3',5'-cyclic AMP site.

This sequence belongs to the cAMP-dependent kinase regulatory chain family. In terms of assembly, the inactive holoenzyme is composed of two regulatory chains and two catalytic chains. Activation by cAMP releases the two active catalytic monomers and the regulatory dimer. Interacts with PRKX; regulates this cAMP-dependent protein kinase. Interacts with smAKAP; this interaction may target PRKAR1B to the plasma membrane. The pseudophosphorylation site binds to the substrate-binding region of the catalytic chain, resulting in the inhibition of its activity. Four types of regulatory chains are found: I-alpha, I-beta, II-alpha, and II-beta. Their expression varies among tissues and is in some cases constitutive and in others inducible.

It localises to the cell membrane. In terms of biological role, regulatory subunit of the cAMP-dependent protein kinases involved in cAMP signaling in cells. The protein is cAMP-dependent protein kinase type I-beta regulatory subunit (Prkar1b) of Mus musculus (Mouse).